A 184-amino-acid chain; its full sequence is Photosystem I assembly protein Ycf4 (184 aa).

Transmembrane regions (helical) follow at residues 22 to 42 (FCWA…GTSS) and 57 to 77 (IIFF…LFIS).

Belongs to the Ycf4 family.

It is found in the plastid. The protein localises to the chloroplast thylakoid membrane. Seems to be required for the assembly of the photosystem I complex. The protein is Photosystem I assembly protein Ycf4 of Lepidium virginicum (Virginia pepperweed).